The sequence spans 1178 residues: Double-stranded RNA-specific adenosine deaminase (1178 aa).

Residues 1–40 (MSQGFRGPTGVFPHQTQSYLDPSHEHSKWRYPQPQGPESY) form a disordered region. Asymmetric dimethylarginine occurs at positions 30 and 42. The Z-binding 1 domain occupies 135 to 201 (LSISQSPEQK…GKPPLWSLVP (67 aa)). The interaction with Z-DNA stretch occupies residues 135 to 204 (LSISQSPEQK…PLWSLVPLSQ (70 aa)). A disordered region spans residues 221–244 (EFPRGEPGLDSEDGDPASDLEGPS). A compositionally biased stretch (acidic residues) spans 229-238 (LDSEDGDPAS). Residues Ser-231 and Ser-238 each carry the phosphoserine modification. The region spanning 246-310 (PLDMAEIKEK…ATPPIWYLTD (65 aa)) is the Z-binding 2 domain. The tract at residues 316–383 (LQMKRSTHSA…SRHEARPGPM (68 aa)) is disordered. Over residues 323–337 (HSAPAPTPTAVPEAT) the composition is skewed to low complexity. A compositionally biased stretch (basic and acidic residues) spans 360–379 (KRVENGQEPAIKHESRHEAR). Lys-371 participates in a covalent cross-link: Glycyl lysine isopeptide (Lys-Gly) (interchain with G-Cter in SUMO); alternate. Lys-371 is covalently cross-linked (Glycyl lysine isopeptide (Lys-Gly) (interchain with G-Cter in SUMO1); alternate). Lys-371 is covalently cross-linked (Glycyl lysine isopeptide (Lys-Gly) (interchain with G-Cter in SUMO2); alternate). Ser-434 is modified (phosphoserine). The region spanning 456 to 524 (NPVSGLLEYA…AVKAMAILLR (69 aa)) is the DRBM 1 domain. The span at 527-550 (KAKDSGQPEDLSHCPMEEDSEKPA) shows a compositional bias: basic and acidic residues. Residues 527–564 (KAKDSGQPEDLSHCPMEEDSEKPAEAQAPSSSATSLFS) are disordered. Residues 554-564 (APSSSATSLFS) show a composition bias toward polar residues. Phosphoserine occurs at positions 567, 582, and 589. In terms of domain architecture, DRBM 2 spans 567 to 635 (SPVTTLLECM…AEEAMKALQE (69 aa)). Residues 631–657 (KALQEEAASSADDQSGGANTDSLDESM) are disordered. Low complexity predominate over residues 635-648 (EEAASSADDQSGGA). An N-terminal extension of DRBM 3 and constituent of a bi-partite nuclear localization signal region spans residues 665 to 674 (IGELVRYLNT). The DRBM 3 domain maps to 675-743 (NPVGGLLEYA…ADAALRVLIG (69 aa)). The interval 744 to 750 (ESEKAEQ) is C-terminal extension of DRBM 3 and constituent of a bi-partite nuclear localization signal. A Phosphothreonine modification is found at Thr-757. Ser-763, Ser-772, and Ser-774 each carry phosphoserine. A Glycyl lysine isopeptide (Lys-Gly) (interchain with G-Cter in SUMO2) cross-link involves residue Lys-824. Residues 835 to 1170 (SLGTGNRCVK…ISKPQEEKNF (336 aa)) form the A to I editase domain. His-859 contacts Zn(2+). Glu-861 acts as the Proton donor in catalysis. Residues Cys-915 and Cys-985 each contribute to the Zn(2+) site.

Homodimer. Homodimerization is essential for its catalytic activity. Isoform 5 can form heterodimers with ADARB1/ADAR2. Isoform 1 and isoform 5 (via DRBM 3 domain) interact with TNPO1. Isoform 5 (via DRBM domains) interacts with XPO5. Isoform 1 and isoform 5 can interact with UPF1. Isoform 1 interacts with ILF2/NF45 and ILF3/NF90. Binding to ILF3/NF90 up-regulates ILF3-mediated gene expression. Isoform 1 and isoform 5 interact with EIF2AK2/PKR. In terms of processing, sumoylation reduces RNA-editing activity. Highest levels in brain and spleen. Lowest levels in liver.

The protein localises to the cytoplasm. Its subcellular location is the nucleus. The protein resides in the nucleolus. The catalysed reaction is adenosine in double-stranded RNA + H2O + H(+) = inosine in double-stranded RNA + NH4(+). In terms of biological role, catalyzes the hydrolytic deamination of adenosine to inosine in double-stranded RNA (dsRNA) referred to as A-to-I RNA editing. This may affect gene expression and function in a number of ways that include mRNA translation by changing codons and hence the amino acid sequence of proteins since the translational machinery read the inosine as a guanosine; pre-mRNA splicing by altering splice site recognition sequences; RNA stability by changing sequences involved in nuclease recognition; genetic stability in the case of RNA virus genomes by changing sequences during viral RNA replication; and RNA structure-dependent activities such as microRNA production or targeting or protein-RNA interactions. Can edit both viral and cellular RNAs and can edit RNAs at multiple sites (hyper-editing) or at specific sites (site-specific editing). Its cellular RNA substrates include: bladder cancer-associated protein (BLCAP), neurotransmitter receptors for glutamate (GRIA2) and serotonin (HTR2C) and GABA receptor (GABRA3). Site-specific RNA editing of transcripts encoding these proteins results in amino acid substitutions which consequently alters their functional activities. Exhibits low-level editing at the GRIA2 Q/R site, but edits efficiently at the R/G site and HOTSPOT1. Does not affect polyomavirus replication but provides protection against virus-induced cytopathic effects. Essential for embryonic development and cell survival and plays a critical role in the maintenance of hematopoietic stem cells. The protein is Double-stranded RNA-specific adenosine deaminase (Adar) of Mus musculus (Mouse).